A 431-amino-acid chain; its full sequence is MANSC domain-containing protein 1 (431 aa).

The first 26 residues, 1–26, serve as a signal peptide directing secretion; the sequence is MFFGGKGSLTYTLVIICFLTLRLAAS. Over 27 to 385 the chain is Extracellular; sequence QNCLNKSLED…QYGLPFEKWL (359 aa). N31 carries N-linked (GlcNAc...) asparagine glycosylation. Positions 33–117 constitute an MANSC domain; sequence SLEDVVIDIQ…LKPAKGLRSY (85 aa). N222 and N251 each carry an N-linked (GlcNAc...) asparagine glycan. Positions 236–279 are disordered; that stretch reads HTTSATPKPAIRLPTNASVTPSGTSQPQLATTSPPVTTVTSQPP. Positions 250 to 265 are enriched in polar residues; it reads TNASVTPSGTSQPQLA. A compositionally biased stretch (low complexity) spans 266 to 279; the sequence is TTSPPVTTVTSQPP. Residues N327 and N352 are each glycosylated (N-linked (GlcNAc...) asparagine). Residues 352–372 are disordered; sequence NKTASWEGREASPGRSSQGNV. A helical transmembrane segment spans residues 386–408; it reads LIGSLLFGVLFLVIGLVLLGRIL. At 409 to 431 the chain is on the cytoplasmic side; sequence SESLRRKRYSRLDYLINGIYVDI.

The protein resides in the membrane. The chain is MANSC domain-containing protein 1 (MANSC1) from Macaca fascicularis (Crab-eating macaque).